We begin with the raw amino-acid sequence, 152 residues long: Large ribosomal subunit protein uL15 (152 aa).

The segment at 1–56 (MTSTLNTLKSNLGSRKKKLRKGRGIAAGQGASCGFGMRGQKSRSGRPTRPGFEGGQ) is disordered. Positions 14 to 23 (SRKKKLRKGR) are enriched in basic residues. The span at 25 to 37 (IAAGQGASCGFGM) shows a compositional bias: gly residues.

This sequence belongs to the universal ribosomal protein uL15 family. In terms of assembly, part of the 50S ribosomal subunit.

In terms of biological role, binds to the 23S rRNA. This chain is Large ribosomal subunit protein uL15, found in Prochlorococcus marinus (strain MIT 9515).